Here is a 71-residue protein sequence, read N- to C-terminus: Translation initiation factor IF-1 (71 aa).

The S1-like domain maps to 1-71 (MKEKNIEMQG…SKGRIIFRSR (71 aa)).

This sequence belongs to the IF-1 family. In terms of assembly, component of the 30S ribosomal translation pre-initiation complex which assembles on the 30S ribosome in the order IF-2 and IF-3, IF-1 and N-formylmethionyl-tRNA(fMet); mRNA recruitment can occur at any time during PIC assembly.

The protein resides in the cytoplasm. In terms of biological role, one of the essential components for the initiation of protein synthesis. Stabilizes the binding of IF-2 and IF-3 on the 30S subunit to which N-formylmethionyl-tRNA(fMet) subsequently binds. Helps modulate mRNA selection, yielding the 30S pre-initiation complex (PIC). Upon addition of the 50S ribosomal subunit IF-1, IF-2 and IF-3 are released leaving the mature 70S translation initiation complex. In Buchnera aphidicola subsp. Cinara cedri (strain Cc), this protein is Translation initiation factor IF-1.